We begin with the raw amino-acid sequence, 314 residues long: Glutathione synthetase (314 aa).

An ATP-grasp domain is found at 125-309; it reads KLFVMNFPQL…VAAKVWDTIE (185 aa). ATP is bound at residue 151–207; that stretch reads RDKHGAVVMKPLHGHGGAAVFRVMPQDMNFGSLFDMFTVTFKEPWVIQQFIPEVKHG. Positions 280 and 282 each coordinate Mg(2+).

It belongs to the prokaryotic GSH synthase family. Mg(2+) is required as a cofactor. It depends on Mn(2+) as a cofactor.

It carries out the reaction gamma-L-glutamyl-L-cysteine + glycine + ATP = glutathione + ADP + phosphate + H(+). The protein operates within sulfur metabolism; glutathione biosynthesis; glutathione from L-cysteine and L-glutamate: step 2/2. This chain is Glutathione synthetase, found in Bradyrhizobium diazoefficiens (strain JCM 10833 / BCRC 13528 / IAM 13628 / NBRC 14792 / USDA 110).